We begin with the raw amino-acid sequence, 124 residues long: Multifunctional methyltransferase subunit TRM112 homolog B (124 aa).

Residues 2-120 (RLIVHNMLSC…SKGIPNMLLH (119 aa)) enclose the TRM112 domain.

This sequence belongs to the TRM112 family. As to quaternary structure, interacts with TRM9. As to expression, expressed in anthers.

Acts as an activator of both rRNA/tRNA and protein methyltransferases. Required for TRM9 tRNA methyltransferase activity. This chain is Multifunctional methyltransferase subunit TRM112 homolog B, found in Arabidopsis thaliana (Mouse-ear cress).